The chain runs to 500 residues: Lysine--tRNA ligase (500 aa).

Mg(2+) is bound by residues Glu-410 and Glu-417.

This sequence belongs to the class-II aminoacyl-tRNA synthetase family. As to quaternary structure, homodimer. It depends on Mg(2+) as a cofactor.

It is found in the cytoplasm. It catalyses the reaction tRNA(Lys) + L-lysine + ATP = L-lysyl-tRNA(Lys) + AMP + diphosphate. This chain is Lysine--tRNA ligase, found in Shewanella frigidimarina (strain NCIMB 400).